A 263-amino-acid polypeptide reads, in one-letter code: MGLKSFGVLGNPIKHSKSPLIHNACFLTFQKELGFLGHYHPILLPLESHIKNEFLNLGLSGANVTLPFKERAFQVCDKIKGIALECGAVNTLVLENDELVGYNTDALGFYLSLKQKNYQSALILGSGGSAKALACELKKRGLKVSVLNRSTKGLDFFQNLGCACFTTTPKGAFDLIINATSASLNNELPLDKEVLKGYFKESRLAYDLAYGFLTPFLSLAKELKLPFQDGKGMLIYQASLSFEKFSSSQISYSKAFEIMRSVF.

Shikimate-binding positions include 16-18 (SKS) and threonine 65. Lysine 69 (proton acceptor) is an active-site residue. Shikimate contacts are provided by asparagine 90 and aspartate 105. Residues 125–129 (GSGGS) and leucine 208 contribute to the NADP(+) site. Tyrosine 210 contributes to the shikimate binding site. Glycine 230 provides a ligand contact to NADP(+).

The protein belongs to the shikimate dehydrogenase family. Homodimer.

It catalyses the reaction shikimate + NADP(+) = 3-dehydroshikimate + NADPH + H(+). It functions in the pathway metabolic intermediate biosynthesis; chorismate biosynthesis; chorismate from D-erythrose 4-phosphate and phosphoenolpyruvate: step 4/7. Involved in the biosynthesis of the chorismate, which leads to the biosynthesis of aromatic amino acids. Catalyzes the reversible NADPH linked reduction of 3-dehydroshikimate (DHSA) to yield shikimate (SA). This is Shikimate dehydrogenase (NADP(+)) from Helicobacter acinonychis (strain Sheeba).